We begin with the raw amino-acid sequence, 283 residues long: Pre-mRNA-splicing factor CWC23 (283 aa).

A J domain is found at 15–87; it reads NLYDVLELPT…DVRPHYDRWL (73 aa).

This sequence belongs to the DnaJ family. In terms of assembly, belongs to the CWC complex (or CEF1-associated complex), a spliceosome sub-complex reminiscent of a late-stage spliceosome composed of the U2, U5 and U6 snRNAs and at least BUD13, BUD31, BRR2, CDC40, CEF1, CLF1, CUS1, CWC2, CWC15, CWC21, CWC22, CWC23, CWC24, CWC25, CWC27, ECM2, HSH155, IST3, ISY1, LEA1, MSL1, NTC20, PRP8, PRP9, PRP11, PRP19, PRP21, PRP22, PRP45, PRP46, SLU7, SMB1, SMD1, SMD2, SMD3, SMX2, SMX3, SNT309, SNU114, SPP2, SYF1, SYF2, RSE1 and YJU2.

It is found in the cytoplasm. The protein resides in the nucleus. In terms of biological role, involved in pre-mRNA splicing. May be involved in endoplasmic reticulum-associated protein degradation (ERAD) and required for growth at low and high temperatures. The chain is Pre-mRNA-splicing factor CWC23 (CWC23) from Saccharomyces cerevisiae (strain ATCC 204508 / S288c) (Baker's yeast).